The primary structure comprises 415 residues: Serine hydroxymethyltransferase 2 (415 aa).

(6S)-5,6,7,8-tetrahydrofolate is bound by residues leucine 121 and 125–127 (GHL). Lysine 229 carries the post-translational modification N6-(pyridoxal phosphate)lysine.

It belongs to the SHMT family. Homodimer. The cofactor is pyridoxal 5'-phosphate.

It localises to the cytoplasm. It carries out the reaction (6R)-5,10-methylene-5,6,7,8-tetrahydrofolate + glycine + H2O = (6S)-5,6,7,8-tetrahydrofolate + L-serine. It participates in one-carbon metabolism; tetrahydrofolate interconversion. Its pathway is amino-acid biosynthesis; glycine biosynthesis; glycine from L-serine: step 1/1. Its function is as follows. Catalyzes the reversible interconversion of serine and glycine with tetrahydrofolate (THF) serving as the one-carbon carrier. This reaction serves as the major source of one-carbon groups required for the biosynthesis of purines, thymidylate, methionine, and other important biomolecules. Also exhibits THF-independent aldolase activity toward beta-hydroxyamino acids, producing glycine and aldehydes, via a retro-aldol mechanism. This Bordetella bronchiseptica (strain ATCC BAA-588 / NCTC 13252 / RB50) (Alcaligenes bronchisepticus) protein is Serine hydroxymethyltransferase 2.